A 238-amino-acid polypeptide reads, in one-letter code: Small ribosomal subunit protein uS2 (238 aa).

The protein belongs to the universal ribosomal protein uS2 family.

The protein is Small ribosomal subunit protein uS2 of Haemophilus ducreyi (strain 35000HP / ATCC 700724).